Here is a 260-residue protein sequence, read N- to C-terminus: UPF0246 protein APJL_0596 (260 aa).

Belongs to the UPF0246 family.

This Actinobacillus pleuropneumoniae serotype 3 (strain JL03) protein is UPF0246 protein APJL_0596.